The following is a 78-amino-acid chain: Acyl carrier protein (78 aa).

A Carrier domain is found at 2–77; the sequence is STIEERVKKI…AAIDYVTSHQ (76 aa). S37 carries the post-translational modification O-(pantetheine 4'-phosphoryl)serine.

The protein belongs to the acyl carrier protein (ACP) family. Post-translationally, 4'-phosphopantetheine is transferred from CoA to a specific serine of apo-ACP by AcpS. This modification is essential for activity because fatty acids are bound in thioester linkage to the sulfhydryl of the prosthetic group.

The protein resides in the cytoplasm. It functions in the pathway lipid metabolism; fatty acid biosynthesis. Its function is as follows. Carrier of the growing fatty acid chain in fatty acid biosynthesis. This Pseudomonas fluorescens (strain SBW25) protein is Acyl carrier protein.